A 761-amino-acid chain; its full sequence is Xaa-Pro dipeptidyl-peptidase (761 aa).

Active-site charge relay system residues include serine 347, aspartate 467, and histidine 497.

Belongs to the peptidase S15 family. Homodimer.

The protein localises to the cytoplasm. It carries out the reaction Hydrolyzes Xaa-Pro-|- bonds to release unblocked, N-terminal dipeptides from substrates including Ala-Pro-|-p-nitroanilide and (sequentially) Tyr-Pro-|-Phe-Pro-|-Gly-Pro-|-Ile.. Its function is as follows. Removes N-terminal dipeptides sequentially from polypeptides having unsubstituted N-termini provided that the penultimate residue is proline. The polypeptide is Xaa-Pro dipeptidyl-peptidase (Streptococcus agalactiae serotype Ia (strain ATCC 27591 / A909 / CDC SS700)).